The following is a 113-amino-acid chain: Parvalbumin beta (113 aa).

Position 1 is an N-acetylalanine (Ala1). An S-linked (Glc) cysteine glycan is attached at Cys18. EF-hand domains are found at residues 38–73 (FSAD…FAAD) and 77–112 (LTDA…WGAK). Ca(2+)-binding residues include Asp51, Asp53, Glu55, Phe57, Glu59, Glu62, Asp90, Asp92, Asp94, Lys96, and Glu101.

This sequence belongs to the parvalbumin family. Muscle (at protein level).

Functionally, in muscle, parvalbumin is thought to be involved in relaxation after contraction. It binds two calcium ions. This Gadus morhua subsp. callarias (Baltic cod) protein is Parvalbumin beta.